A 224-amino-acid polypeptide reads, in one-letter code: tRNA (guanine-N(7)-)-methyltransferase (224 aa).

Residues E56, E81, D108, and D131 each coordinate S-adenosyl-L-methionine. D131 is a catalytic residue. Substrate contacts are provided by residues K135, D167, and 202 to 205 (TKFE).

Belongs to the class I-like SAM-binding methyltransferase superfamily. TrmB family.

The enzyme catalyses guanosine(46) in tRNA + S-adenosyl-L-methionine = N(7)-methylguanosine(46) in tRNA + S-adenosyl-L-homocysteine. It functions in the pathway tRNA modification; N(7)-methylguanine-tRNA biosynthesis. Catalyzes the formation of N(7)-methylguanine at position 46 (m7G46) in tRNA. This chain is tRNA (guanine-N(7)-)-methyltransferase, found in Nitrosomonas eutropha (strain DSM 101675 / C91 / Nm57).